A 357-amino-acid chain; its full sequence is Sorbitol dehydrogenase (357 aa).

The residue at position 2 (A2) is an N-acetylalanine. C45 is a Zn(2+) binding site. Y51 contributes to the substrate binding site. Positions 70, 71, and 156 each coordinate Zn(2+). Residue E156 coordinates substrate. S169 carries the post-translational modification Phosphoserine. NAD(+) contacts are provided by residues I184, D204, R209, 273–275, and 297–299; these read VGM and VFR. Substrate is bound by residues R299 and Y300.

Belongs to the zinc-containing alcohol dehydrogenase family. In terms of assembly, homotetramer; dimer of dimers. Requires Zn(2+) as cofactor. Expressed in liver and testis.

Its subcellular location is the mitochondrion membrane. It is found in the cell projection. It localises to the cilium. The protein localises to the flagellum. It catalyses the reaction keto-D-fructose + NADH + H(+) = D-sorbitol + NAD(+). It carries out the reaction xylitol + NAD(+) = D-xylulose + NADH + H(+). The catalysed reaction is L-iditol + NAD(+) = keto-L-sorbose + NADH + H(+). In terms of biological role, polyol dehydrogenase that catalyzes the reversible NAD(+)-dependent oxidation of various sugar alcohols. Is active with D-sorbitol (D-glucitol) leading to the C2-oxidized product D-fructose. Is a key enzyme in the polyol pathway that interconverts glucose and fructose via sorbitol, which constitutes an important alternate route for glucose metabolism. May play a role in sperm motility by using sorbitol as an alternative energy source for sperm motility. The sequence is that of Sorbitol dehydrogenase (Sord) from Rattus norvegicus (Rat).